The sequence spans 483 residues: Probable glycine dehydrogenase (decarboxylating) subunit 2 (483 aa).

K264 is subject to N6-(pyridoxal phosphate)lysine.

Belongs to the GcvP family. C-terminal subunit subfamily. The glycine cleavage system is composed of four proteins: P, T, L and H. In this organism, the P 'protein' is a heterodimer of two subunits. Pyridoxal 5'-phosphate serves as cofactor.

The catalysed reaction is N(6)-[(R)-lipoyl]-L-lysyl-[glycine-cleavage complex H protein] + glycine + H(+) = N(6)-[(R)-S(8)-aminomethyldihydrolipoyl]-L-lysyl-[glycine-cleavage complex H protein] + CO2. The glycine cleavage system catalyzes the degradation of glycine. The P protein binds the alpha-amino group of glycine through its pyridoxal phosphate cofactor; CO(2) is released and the remaining methylamine moiety is then transferred to the lipoamide cofactor of the H protein. This chain is Probable glycine dehydrogenase (decarboxylating) subunit 2, found in Nitrosomonas eutropha (strain DSM 101675 / C91 / Nm57).